A 187-amino-acid chain; its full sequence is Putative protein YbeM (187 aa).

Positions 1 to 163 (MMTTILTIHV…PALIMAEVTP (163 aa)) constitute a CN hydrolase domain.

It belongs to the carbon-nitrogen hydrolase superfamily. NIT1/NIT2 family.

Pseudogene resulting from a nucleotide deletion that introduces a premature stop codon at position 66. This is the C-terminal fragment. The intact protein (AC A0A140NCB4) hydrolyzes deaminated glutathione (dGSH, 2-oxoglutaramate) to alpha-ketoglutarate (alpha-KG) and cysteinylglycine, has less activity against alpha-ketoglutaramate (a-KGM) and no activity on glutathione or L-glutamine. May function as a metabolite repair enzyme. This Escherichia coli (strain K12) protein is Putative protein YbeM (ybeM).